We begin with the raw amino-acid sequence, 256 residues long: Protein US2 homolog (256 aa).

Disordered stretches follow at residues 100–120 (TRRP…SPPP), 167–186 (STAA…RRRP), and 236–256 (VRRR…CTIS). Residues 167-180 (STAAGAPGAPTGAR) are compositionally biased toward low complexity. Over residues 245–256 (NGRERAPRCTIS) the composition is skewed to basic and acidic residues.

This sequence belongs to the herpesviridae US2 family.

The sequence is that of Protein US2 homolog (28K) from Sus scrofa (Pig).